We begin with the raw amino-acid sequence, 138 residues long: Regulator of ribonuclease activity B (138 aa).

Residues 114–138 (YFEDPNGEDGDDEDFVDEDDDGVRH) form a disordered region. A compositionally biased stretch (acidic residues) spans 118–138 (PNGEDGDDEDFVDEDDDGVRH).

Belongs to the RraB family. Interacts with the C-terminal region of Rne.

Its subcellular location is the cytoplasm. In terms of biological role, globally modulates RNA abundance by binding to RNase E (Rne) and regulating its endonucleolytic activity. Can modulate Rne action in a substrate-dependent manner by altering the composition of the degradosome. In Escherichia coli (strain K12), this protein is Regulator of ribonuclease activity B.